A 391-amino-acid chain; its full sequence is Matrix metalloproteinase-23 (391 aa).

Residues 1–18 (MGCRACLRPEASGAVQGR) are Cytoplasmic-facing. Residues 1–79 (MGCRACLRPE…LTMSVTRRRR (79 aa)) constitute a propeptide that is removed on maturation. The helical transmembrane segment at 19–39 (WLGAALSGLCLLSALALLEWL) threads the bilayer. Residues 40–391 (GAPTETAWRA…TYSWRVRVRN (352 aa)) are Lumenal-facing. Residues Asn-93 and Asn-149 are each glycosylated (N-linked (GlcNAc...) asparagine). Residue His-212 coordinates Zn(2+). Residue Glu-213 is part of the active site. Zn(2+) is bound by residues His-216 and His-222. A glycan (N-linked (GlcNAc...) asparagine) is linked at Asn-233. Positions 256-290 (CLDRIFVCASWARKGFCDVRQRLMKRLCPRSCDFC) constitute a ShKT domain. Disulfide bonds link Cys-256–Cys-290, Cys-263–Cys-283, and Cys-272–Cys-287. One can recognise an Ig-like C2-type domain in the interval 298–383 (VATTTSPTRT…RRHQRVLSTY (86 aa)). An N-linked (GlcNAc...) asparagine glycan is attached at Asn-317. Cys-322 and Cys-371 are joined by a disulfide.

This sequence belongs to the peptidase M10A family. Zn(2+) serves as cofactor. In terms of processing, N-glycosylated. Proteolytic cleavage might yield an active form. Expressed at relatively high level in heart, lung and spleen. Not detected in brain, liver, skeletal muscle, kidney and testis.

The protein resides in the endoplasmic reticulum membrane. The protein localises to the membrane. With respect to regulation, inhibited by TIMP2. Functionally, protease. May regulate the surface expression of some potassium channels by retaining them in the endoplasmic reticulum. This chain is Matrix metalloproteinase-23 (Mmp23), found in Mus musculus (Mouse).